Consider the following 398-residue polypeptide: LL-diaminopimelate aminotransferase (398 aa).

Positions 14 and 41 each coordinate substrate. Residues Y71, 104 to 105 (AK), Y128, N174, Y205, and 233 to 235 (SFS) each bind pyridoxal 5'-phosphate. Residues K105, Y128, and N174 each coordinate substrate. K236 is modified (N6-(pyridoxal phosphate)lysine). Pyridoxal 5'-phosphate-binding residues include R244 and N275. Positions 275 and 368 each coordinate substrate.

The protein belongs to the class-I pyridoxal-phosphate-dependent aminotransferase family. LL-diaminopimelate aminotransferase subfamily. As to quaternary structure, homodimer. Requires pyridoxal 5'-phosphate as cofactor.

The catalysed reaction is (2S,6S)-2,6-diaminopimelate + 2-oxoglutarate = (S)-2,3,4,5-tetrahydrodipicolinate + L-glutamate + H2O + H(+). Its pathway is amino-acid biosynthesis; L-lysine biosynthesis via DAP pathway; LL-2,6-diaminopimelate from (S)-tetrahydrodipicolinate (aminotransferase route): step 1/1. Involved in the synthesis of meso-diaminopimelate (m-DAP or DL-DAP), required for both lysine and peptidoglycan biosynthesis. Catalyzes the direct conversion of tetrahydrodipicolinate to LL-diaminopimelate. This chain is LL-diaminopimelate aminotransferase, found in Chlamydia felis (strain Fe/C-56) (Chlamydophila felis).